A 552-amino-acid chain; its full sequence is Harmonin (552 aa).

The interval 1 to 86 is N-terminal domain; that stretch reads MDRKVAREFR…LTPRRSRKLK (86 aa). PDZ domains follow at residues 87 to 169 and 211 to 293; these read EVRL…HIGL and KVFI…AAAG. The segment at 194 to 552 is mediates interaction with MYO7B; the sequence is GVRGSLGSPG…KEYDDELTFF (359 aa). Residue Ser-219 is modified to Phosphoserine. The stretch at 310-377 forms a coiled coil; that stretch reads RELQRQELLM…EKFKKQWEED (68 aa). The segment at 401-427 is disordered; that stretch reads KPKYDQGVEPELEPADDLDGGTEEQGE. Over residues 408 to 427 the composition is skewed to acidic residues; it reads VEPELEPADDLDGGTEEQGE. Residues 452 to 537 form the PDZ 3 domain; the sequence is DVRLLRIKKE…QGGDWIDLVV (86 aa).

As to quaternary structure, part of the IMAC/intermicrovillar adhesion complex/intermicrovillar tip-link complex composed of ANKS4B, MYO7B, USH1C, CDHR2 and CDHR5. Part of a complex composed of USH1C, USH1G and MYO7A. Interacts with F-actin. Interacts with USH2A. Interacts with SLC4A7. Interacts (via PDZ1 domain) with the C-terminus of USHBP1. Interacts (via N-terminus and PDZ 2 domain) with CDH23. Interacts with USH1G. Interacts with MYO7B. Interacts with CDHR2 and CDHR5; may mediate their interaction with MYO7B at the microvilli tip. Interacts (via PDZ 1 domain) with ANKS4B. Interacts (via PDZ 1 domain) with DOCK4. Expressed in small intestine, colon, kidney, eye and weakly in pancreas. Expressed also in vestibule of the inner ear.

Its subcellular location is the cytoplasm. It is found in the cytosol. The protein resides in the cytoskeleton. The protein localises to the cell projection. It localises to the microvillus. In terms of biological role, anchoring/scaffolding protein that is a part of the functional network formed by USH1C, USH1G, CDH23 and MYO7A that mediates mechanotransduction in cochlear hair cells. Required for normal development and maintenance of cochlear hair cell bundles. As part of the intermicrovillar adhesion complex/IMAC plays a role in brush border differentiation, controlling microvilli organization and length. Probably plays a central regulatory role in the assembly of the complex, recruiting CDHR2, CDHR5 and MYO7B to the microvilli tips. The sequence is that of Harmonin (USH1C) from Homo sapiens (Human).